The sequence spans 540 residues: Chaperonin GroEL 2 (540 aa).

ATP-binding positions include 29–32, K50, 86–90, G414, and D496; these read TMGP and DGTTT.

This sequence belongs to the chaperonin (HSP60) family. In terms of assembly, forms a cylinder of 14 subunits composed of two heptameric rings stacked back-to-back. Interacts with the co-chaperonin GroES.

Its subcellular location is the cytoplasm. The catalysed reaction is ATP + H2O + a folded polypeptide = ADP + phosphate + an unfolded polypeptide.. In terms of biological role, together with its co-chaperonin GroES, plays an essential role in assisting protein folding. The GroEL-GroES system forms a nano-cage that allows encapsulation of the non-native substrate proteins and provides a physical environment optimized to promote and accelerate protein folding. This chain is Chaperonin GroEL 2, found in Rhodopirellula baltica (strain DSM 10527 / NCIMB 13988 / SH1).